Here is a 26-residue protein sequence, read N- to C-terminus: Acyl carrier protein (26 aa).

Positions Ser-2 to Glu-26 constitute a Carrier domain.

It belongs to the acyl carrier protein (ACP) family. Post-translationally, 4'-phosphopantetheine is transferred from CoA to a specific serine of apo-ACP by AcpS. This modification is essential for activity because fatty acids are bound in thioester linkage to the sulfhydryl of the prosthetic group.

The protein localises to the cytoplasm. It participates in lipid metabolism; fatty acid biosynthesis. Its function is as follows. Carrier of the growing fatty acid chain in fatty acid biosynthesis. This chain is Acyl carrier protein (acpP), found in Erythrobacter longus.